A 447-amino-acid chain; its full sequence is Alpha-1,3-mannosyl-glycoprotein 2-beta-N-acetylglucosaminyltransferase (447 aa).

The Cytoplasmic portion of the chain corresponds to 1–6 (MLKKQT). Residues 7–29 (AGLVLWGAIIFVGWNALLLLFFW) form a helical; Signal-anchor for type II membrane protein membrane-spanning segment. The Lumenal portion of the chain corresponds to 30–447 (TRPAPGRLPS…TWTGYDPSWN (418 aa)). C115 and C145 form a disulfide bridge. Positions 117, 144, 190, and 212 each coordinate substrate. D213 is a binding site for Mn(2+). A disulfide bridge connects residues C239 and C305. D291 functions as the Proton acceptor in the catalytic mechanism. S322 serves as a coordination point for substrate.

The protein belongs to the glycosyltransferase 13 family. In terms of assembly, interacts with MGAT4D. Interacts with BRI3. Mn(2+) is required as a cofactor. As to expression, detected in kidney, liver and brain.

It is found in the golgi apparatus membrane. The protein resides in the cytoplasm. The protein localises to the perinuclear region. It carries out the reaction N(4)-(alpha-D-Man-(1-&gt;3)-[alpha-D-Man-(1-&gt;3)-[alpha-D-Man-(1-&gt;6)]-alpha-D-Man-(1-&gt;6)]-beta-D-Man-(1-&gt;4)-beta-D-GlcNAc-(1-&gt;4)-beta-D-GlcNAc)-L-asparaginyl-[protein] (N-glucan mannose isomer 5A1,2) + UDP-N-acetyl-alpha-D-glucosamine = N(4)-{beta-D-GlcNAc-(1-&gt;2)-alpha-D-Man-(1-&gt;3)-[alpha-D-Man-(1-&gt;3)-[alpha-D-Man-(1-&gt;6)]-alpha-D-Man-(1-&gt;6)]-beta-D-Man-(1-&gt;4)-beta-D-GlcNAc-(1-&gt;4)-beta-D-GlcNAc}-L-asparaginyl-[protein] + UDP + H(+). Its pathway is protein modification; protein glycosylation. Its function is as follows. Initiates complex N-linked carbohydrate formation. Essential for the conversion of high-mannose to hybrid and complex N-glycans. The polypeptide is Alpha-1,3-mannosyl-glycoprotein 2-beta-N-acetylglucosaminyltransferase (Mgat1) (Mus musculus (Mouse)).